The chain runs to 444 residues: Phosphoglucosamine mutase (444 aa).

The Phosphoserine intermediate role is filled by Ser-104. The Mg(2+) site is built by Ser-104, Asp-243, Asp-245, and Asp-247. Ser-104 bears the Phosphoserine mark.

The protein belongs to the phosphohexose mutase family. It depends on Mg(2+) as a cofactor. Activated by phosphorylation.

The catalysed reaction is alpha-D-glucosamine 1-phosphate = D-glucosamine 6-phosphate. Its function is as follows. Catalyzes the conversion of glucosamine-6-phosphate to glucosamine-1-phosphate. The polypeptide is Phosphoglucosamine mutase (Neisseria meningitidis serogroup C / serotype 2a (strain ATCC 700532 / DSM 15464 / FAM18)).